The following is a 648-amino-acid chain: Probable potassium transport system protein Kup 1 (648 aa).

Residues 1-31 (MSDAVTDADGSSAQSHAQSAGHHAVQGHGGH) are disordered. Low complexity predominate over residues 10-26 (GSSAQSHAQSAGHHAVQ). 12 consecutive transmembrane segments (helical) span residues 39 to 59 (LAVGAIGVVFGDIGTSPLYAL), 73 to 93 (LLHIYGIISLMFWSMMIIVTF), 130 to 150 (IILLGVFATALFYGDSMITPA), 165 to 185 (PDMHPLIVPLVVGILIGLFFI), 193 to 213 (VAAFFGPIMLVYFGTIAVLGA), 243 to 263 (FLAMGAAVLAVTGAEALYADM), 275 to 295 (WLVFVLPALVLNYLGQASLLI), 317 to 337 (LLFIASCAAVIASQAVISGAF), 364 to 384 (IFIPVINWALMIAVILLVLVF), 394 to 414 (YGIAVTGAMLIDNFLLAVVLF), 421 to 441 (APAAIAMLAVFFAIDAAYLGA), and 446 to 466 (IPDGGWVPLVMGIAIFTLLTT).

The protein belongs to the HAK/KUP transporter (TC 2.A.72) family.

It is found in the cell inner membrane. It catalyses the reaction K(+)(in) + H(+)(in) = K(+)(out) + H(+)(out). Its function is as follows. Transport of potassium into the cell. Likely operates as a K(+):H(+) symporter. This Novosphingobium aromaticivorans (strain ATCC 700278 / DSM 12444 / CCUG 56034 / CIP 105152 / NBRC 16084 / F199) protein is Probable potassium transport system protein Kup 1.